Consider the following 186-residue polypeptide: Shikimate kinase (186 aa).

15–20 (GAGKTT) serves as a coordination point for ATP. Thr19 contributes to the Mg(2+) binding site. Substrate is bound by residues Asp37, Arg61, and Gly83. Arg121 lines the ATP pocket. A substrate-binding site is contributed by Arg140.

Belongs to the shikimate kinase family. In terms of assembly, monomer. Mg(2+) serves as cofactor.

It localises to the cytoplasm. It carries out the reaction shikimate + ATP = 3-phosphoshikimate + ADP + H(+). The protein operates within metabolic intermediate biosynthesis; chorismate biosynthesis; chorismate from D-erythrose 4-phosphate and phosphoenolpyruvate: step 5/7. In terms of biological role, catalyzes the specific phosphorylation of the 3-hydroxyl group of shikimic acid using ATP as a cosubstrate. This is Shikimate kinase from Psychrobacter cryohalolentis (strain ATCC BAA-1226 / DSM 17306 / VKM B-2378 / K5).